The chain runs to 181 residues: Large ribosomal subunit protein uL10 (181 aa).

It belongs to the universal ribosomal protein uL10 family. As to quaternary structure, part of the ribosomal stalk of the 50S ribosomal subunit. The N-terminus interacts with L11 and the large rRNA to form the base of the stalk. The C-terminus forms an elongated spine to which L12 dimers bind in a sequential fashion forming a multimeric L10(L12)X complex.

In terms of biological role, forms part of the ribosomal stalk, playing a central role in the interaction of the ribosome with GTP-bound translation factors. This Fervidobacterium nodosum (strain ATCC 35602 / DSM 5306 / Rt17-B1) protein is Large ribosomal subunit protein uL10.